The sequence spans 61 residues: Metallothionein-1F (61 aa).

At methionine 1 the chain carries N-acetylmethionine. A beta region spans residues 1–29; sequence MDPNCSCPTGGSCTCAGSCTCKACRCTSC. A divalent metal cation-binding residues include cysteine 5, cysteine 7, cysteine 13, cysteine 15, cysteine 19, cysteine 21, cysteine 24, cysteine 26, cysteine 29, cysteine 33, cysteine 34, cysteine 36, cysteine 37, cysteine 41, cysteine 44, cysteine 48, cysteine 50, and cysteine 57. The tract at residues 30–61 is alpha; it reads KKSCCSCCPAGCAKCAQGCICKGASDKCSCCA. The residue at position 58 (serine 58) is a Phosphoserine. The a divalent metal cation site is built by cysteine 59 and cysteine 60.

This sequence belongs to the metallothionein superfamily. Type 1 family. As to quaternary structure, monomer.

Metallothioneins have a high content of cysteine residues that bind various heavy metals; these proteins are transcriptionally regulated by both heavy metals and glucocorticoids. The polypeptide is Metallothionein-1F (MT1F) (Sus scrofa (Pig)).